A 774-amino-acid polypeptide reads, in one-letter code: MTAPTESSPFSPADLARHRLSPQEYRRITELIGRHPNLNELGMFSVMWSEHCCYKNSRPLLKGFPTTGPRVLVGPGENAGVIDIGDGLRVAFKIESHNHPSAVEPFQGAATGVGGILRDIFTMGARPIASLNSLRFGPLEDARNRALFRGVVHGIGHYGNCVGVPTVGGEVYFDPTYSGNPLVNAMAIGVLETPEIVRSGAAGIGNPVLYVGSTTGRDGMGGASFASAELSDASQKDRPAVQVGDPFTEKSLIEACLEAFRTGAVVAAQDMGAAGLTCSSSEMAAKGGVGIEMDLDLVPVRETGMVPYEFLLSESQERMLFVAEKGREGELIALFERWGLHAVVVGRVIGEPLVRIFHSGKVVAELPARALTDDAPVYPRAVLPEPPAAILKLRAFDWHSLAEPTDYAEALLTLLDSPTIGSKSWVYRQYDHQVQNNTVIVPGAADAAVIRVRPQSFGPGEVEAVPFTERGIAATVDCNSRYVYLDPYRGAMLAVAEAARNLSCVGATPLAVTDNLNFGSPEKPEGYWQLAMACRGIADACLELMTPVTGGNVSLYNETQSDGRTTAIYPTPTIGMVGLVEDIHRTCSQNFKSPGDLVYLLGGGEPTLGGSEYLACLHGVAAGEPPVLDMALEIQVQSVCRLGIERGLFKSAHDVAEGGLAVALAECCITGNLGLDAVLGANHPRADVVCFGEMAAAIIVTIDPCDQVACELWLECSLAERWKLLGTVAAQSFDLRVENRDCRISTSCERLKTTFEQAIPRRMEHIPVTEAPQR.

Residue histidine 51 is part of the active site. ATP-binding residues include tyrosine 54 and lysine 93. Glutamate 95 contacts Mg(2+). Residues serine 96–histidine 99 and arginine 118 contribute to the substrate site. Residue histidine 97 is the Proton acceptor of the active site. Aspartate 119 contributes to the Mg(2+) binding site. A substrate-binding site is contributed by glutamine 242. Mg(2+) is bound at residue aspartate 270. Residue glutamate 314 to glutamine 316 participates in substrate binding. The ATP site is built by aspartate 514 and glycine 551. Asparagine 552 contributes to the Mg(2+) binding site. Serine 554 is a substrate binding site.

Belongs to the FGAMS family. As to quaternary structure, monomer. Part of the FGAM synthase complex composed of 1 PurL, 1 PurQ and 2 PurS subunits.

Its subcellular location is the cytoplasm. It carries out the reaction N(2)-formyl-N(1)-(5-phospho-beta-D-ribosyl)glycinamide + L-glutamine + ATP + H2O = 2-formamido-N(1)-(5-O-phospho-beta-D-ribosyl)acetamidine + L-glutamate + ADP + phosphate + H(+). It participates in purine metabolism; IMP biosynthesis via de novo pathway; 5-amino-1-(5-phospho-D-ribosyl)imidazole from N(2)-formyl-N(1)-(5-phospho-D-ribosyl)glycinamide: step 1/2. Functionally, part of the phosphoribosylformylglycinamidine synthase complex involved in the purines biosynthetic pathway. Catalyzes the ATP-dependent conversion of formylglycinamide ribonucleotide (FGAR) and glutamine to yield formylglycinamidine ribonucleotide (FGAM) and glutamate. The FGAM synthase complex is composed of three subunits. PurQ produces an ammonia molecule by converting glutamine to glutamate. PurL transfers the ammonia molecule to FGAR to form FGAM in an ATP-dependent manner. PurS interacts with PurQ and PurL and is thought to assist in the transfer of the ammonia molecule from PurQ to PurL. This chain is Phosphoribosylformylglycinamidine synthase subunit PurL, found in Gloeobacter violaceus (strain ATCC 29082 / PCC 7421).